Here is a 168-residue protein sequence, read N- to C-terminus: Ribosome maturation factor RimP (168 aa).

This sequence belongs to the RimP family.

It is found in the cytoplasm. Required for maturation of 30S ribosomal subunits. This is Ribosome maturation factor RimP from Rickettsia bellii (strain OSU 85-389).